Reading from the N-terminus, the 240-residue chain is Small ribosomal subunit protein uS3 (240 aa).

Positions 21–92 (LNEFFTRELA…TIVLYAERVQ (72 aa)) constitute a KH type-2 domain. A phosphothreonine mark is found at Thr44 and Thr70. Position 97 is a phosphoserine (Ser97). Lys106 participates in a covalent cross-link: Glycyl lysine isopeptide (Lys-Gly) (interchain with G-Cter in ubiquitin). Ser129 bears the Phosphoserine mark. Residues Lys132 and Lys141 each participate in a glycyl lysine isopeptide (Lys-Gly) (interchain with G-Cter in ubiquitin) cross-link. An Omega-N-methylarginine; by SFM1 modification is found at Arg146. Residues Lys151, Lys200, and Lys212 each participate in a glycyl lysine isopeptide (Lys-Gly) (interchain with G-Cter in ubiquitin) cross-link. The interval 212–240 (KEEEPILAPSVKDYRPAEETEAQAEPVEA) is disordered. At Ser221 the chain carries Phosphoserine. Residues 230–240 (ETEAQAEPVEA) show a composition bias toward acidic residues. The residue at position 231 (Thr231) is a Phosphothreonine.

The protein belongs to the universal ribosomal protein uS3 family. As to quaternary structure, component of the small ribosomal subunit (SSU). Mature yeast ribosomes consist of a small (40S) and a large (60S) subunit. The 40S small subunit contains 1 molecule of ribosomal RNA (18S rRNA) and 33 different proteins (encoded by 57 genes). The large 60S subunit contains 3 rRNA molecules (25S, 5.8S and 5S rRNA) and 46 different proteins (encoded by 81 genes). In terms of processing, ubiquitinated at Lys-212 in response to stalled ribosomes. Ubiquitination leads to activation of the No-Go Decay (NGD) pathway and degradation of non-functional 18S rRNA: first monoubiquitinated at Lys-212 by MAG2, followed by formation of 'Lys-63'-linked polyubiquitin chains on monoubiquitin by HEL2 and RSP5.

The protein localises to the cytoplasm. In terms of biological role, component of the ribosome, a large ribonucleoprotein complex responsible for the synthesis of proteins in the cell. The small ribosomal subunit (SSU) binds messenger RNAs (mRNAs) and translates the encoded message by selecting cognate aminoacyl-transfer RNA (tRNA) molecules. The large subunit (LSU) contains the ribosomal catalytic site termed the peptidyl transferase center (PTC), which catalyzes the formation of peptide bonds, thereby polymerizing the amino acids delivered by tRNAs into a polypeptide chain. The nascent polypeptides leave the ribosome through a tunnel in the LSU and interact with protein factors that function in enzymatic processing, targeting, and the membrane insertion of nascent chains at the exit of the ribosomal tunnel. The sequence is that of Small ribosomal subunit protein uS3 from Saccharomyces cerevisiae (strain ATCC 204508 / S288c) (Baker's yeast).